We begin with the raw amino-acid sequence, 438 residues long: 23S rRNA (uracil(1939)-C(5))-methyltransferase RlmD (438 aa).

Residues 10 to 69 (KASVNTKHLSVDVVRLDHNSAGIAFVDKKPVFIEGALPEEQAIIQFIEQKKQYSRAKLIK) enclose the TRAM domain. [4Fe-4S] cluster contacts are provided by C82, C88, C91, and C169. S-adenosyl-L-methionine-binding residues include Q272, F301, N306, E322, N349, and D370. The active-site Nucleophile is C396.

This sequence belongs to the class I-like SAM-binding methyltransferase superfamily. RNA M5U methyltransferase family. RlmD subfamily.

The enzyme catalyses uridine(1939) in 23S rRNA + S-adenosyl-L-methionine = 5-methyluridine(1939) in 23S rRNA + S-adenosyl-L-homocysteine + H(+). Functionally, catalyzes the formation of 5-methyl-uridine at position 1939 (m5U1939) in 23S rRNA. The chain is 23S rRNA (uracil(1939)-C(5))-methyltransferase RlmD from Aliivibrio salmonicida (strain LFI1238) (Vibrio salmonicida (strain LFI1238)).